A 704-amino-acid chain; its full sequence is Elongation factor G (704 aa).

Residues 8 to 291 (DKVRNIGIMA…AVVDYLASPL (284 aa)) form the tr-type G domain. Residues 17-24 (AHIDAGKT), 90-94 (DTPGH), and 144-147 (NKMD) contribute to the GTP site.

The protein belongs to the TRAFAC class translation factor GTPase superfamily. Classic translation factor GTPase family. EF-G/EF-2 subfamily.

It localises to the cytoplasm. Functionally, catalyzes the GTP-dependent ribosomal translocation step during translation elongation. During this step, the ribosome changes from the pre-translocational (PRE) to the post-translocational (POST) state as the newly formed A-site-bound peptidyl-tRNA and P-site-bound deacylated tRNA move to the P and E sites, respectively. Catalyzes the coordinated movement of the two tRNA molecules, the mRNA and conformational changes in the ribosome. This is Elongation factor G from Chlorobium luteolum (strain DSM 273 / BCRC 81028 / 2530) (Pelodictyon luteolum).